Reading from the N-terminus, the 381-residue chain is MNLLKRYAAPVACAAAVLVFAACSSTKDARRVPTPLTEFKPVLDVQQVWTASVGKGGRYSFSPVAVGDAVYVAGANGSVEKIDAKTGQQVWRTKIGSDLSAGVGSDGNLTAVGALKGGVFVLGPDGKQLWKATVQGEIFSPPLVGNGLVIVRTIDGQVIAFAAQTGEQKWTYRNRAVPLNLRVSAGMTFAGDAAVLAGFPGGGLVALNLQTGEPFWQTPVSFPKGVTEVERINDVTGAPTLVGAETCAVTFQGQLGCFDANSGRPLWEKPFSSRSGVAQDDTVVVGGDDWSVVSAYDVATGKALWRNDKLKSRDVGVPYLLGRAVVLGDYKGFVHFLSRDDGTFVARMKTDGSAIAAAPVLAGNTLVVLTQDGGVYGFRPR.

Residues 1-22 (MNLLKRYAAPVACAAAVLVFAA) form the signal peptide. Cys-23 carries the N-palmitoyl cysteine lipid modification. Cys-23 carries the S-diacylglycerol cysteine lipid modification.

The protein belongs to the BamB family. In terms of assembly, part of the Bam complex.

Its subcellular location is the cell outer membrane. Its function is as follows. Part of the outer membrane protein assembly complex, which is involved in assembly and insertion of beta-barrel proteins into the outer membrane. This is Outer membrane protein assembly factor BamB from Burkholderia pseudomallei (strain K96243).